The sequence spans 487 residues: N-succinylglutamate 5-semialdehyde dehydrogenase (487 aa).

221-226 (GSSDTG) lines the NAD(+) pocket. Catalysis depends on residues Glu-244 and Cys-278.

It belongs to the aldehyde dehydrogenase family. AstD subfamily.

It carries out the reaction N-succinyl-L-glutamate 5-semialdehyde + NAD(+) + H2O = N-succinyl-L-glutamate + NADH + 2 H(+). The protein operates within amino-acid degradation; L-arginine degradation via AST pathway; L-glutamate and succinate from L-arginine: step 4/5. Its function is as follows. Catalyzes the NAD-dependent reduction of succinylglutamate semialdehyde into succinylglutamate. In Burkholderia mallei (strain ATCC 23344), this protein is N-succinylglutamate 5-semialdehyde dehydrogenase.